Consider the following 458-residue polypeptide: Transcription factor bHLH10 (458 aa).

Positions 1-49 (MEEERESLYEEMGCFDPNTPAEVTVESSFSQAEPPPPPPQVLVAGSTSN) are disordered. The region spanning 243–292 (SRKSRTSPTERERRVHFNDRFFDLKNLIPNPTKIDRASIVGEAIDYIKEL) is the bHLH domain. Residues 315–338 (KRARVGEGGGGEDQEEEEDTVNYK) are disordered. Over residues 324 to 334 (GGEDQEEEEDT) the composition is skewed to acidic residues.

As to quaternary structure, homodimer.

It is found in the nucleus. In Arabidopsis thaliana (Mouse-ear cress), this protein is Transcription factor bHLH10 (BHLH10).